Consider the following 205-residue polypeptide: Spermatogenesis-associated protein 24 (205 aa).

Positions 17 to 166 (LAFDQLRDVI…QQRQSFRNHM (150 aa)) form a coiled coil. The segment at 138 to 185 (EDILNGKENEIKELQQVISQQRQSFRNHMSDFRIQKQQETYMAQVLDQ) is required for interaction with CBX5 and TBPL1. The disordered stretch occupies residues 182–205 (VLDQKHKKTSGTRRARSRQCSREK). Basic residues predominate over residues 186-205 (KHKKTSGTRRARSRQCSREK).

This sequence belongs to the SPATA24 family. Homodimer. Interacts with CBX3, CBX5, GMNN, GTF2B, TBPL1 and the polycomb proteins PHCF2, RNF2 and SCMH1 but not with CBX1 or PCGF2. Highly expressed in the testis and is mainly localized in the spermatids. Also expressed in the lung, heart, spleen and epididymis.

It localises to the cytoplasm. Its subcellular location is the nucleus. The protein localises to the nucleolus. It is found in the nucleoplasm. In terms of biological role, binds DNA with high affinity but does not bind to TATA boxes. Synergises with GMNN and TBP in activation of TATA box-containing promoters and with GMNN and TBPL1 in activation of the NF1 TATA-less promoter. May play a role in cytoplasm movement and removal during spermiogenesis. The sequence is that of Spermatogenesis-associated protein 24 (Spata24) from Rattus norvegicus (Rat).